We begin with the raw amino-acid sequence, 481 residues long: Matrix metalloproteinase-20 (481 aa).

Residues 1–20 (MLPASGLAVLLVTALKFSTA) form the signal peptide. A propeptide spanning residues 21–105 (APSLPAASPR…PRCGVPDVAN (85 aa)) is cleaved from the precursor. N64 carries N-linked (GlcNAc...) asparagine glycosylation. Residues 96 to 103 (PRCGVPDV) carry the Cysteine switch motif. Zn(2+) is bound at residue C98. E162, A163, and D164 together coordinate Ca(2+). The Zn(2+) site is built by H174 and D176. Ca(2+) is bound by residues D181, G182, R184, and T186. Position 189 (H189) interacts with Zn(2+). The Ca(2+) site is built by E195, G196, G198, and D200. H202 serves as a coordination point for Zn(2+). Residues D204 and E207 each contribute to the Ca(2+) site. Residue H224 coordinates Zn(2+). E225 is an active-site residue. Zn(2+)-binding residues include H228 and H234. Hemopexin repeat units lie at residues 291 to 341 (PDLC…FPQL), 342 to 387 (MSNV…GFPR), 389 to 437 (VQRI…FSGV), and 438 to 481 (NGQI…WIGC). A disulfide bridge links C294 with C481. N297 carries an N-linked (GlcNAc...) asparagine glycan.

The protein belongs to the peptidase M10A family. The cofactor is Zn(2+). Ca(2+) is required as a cofactor. Post-translationally, autoactivates at least at the 105-Asn-|-Tyr-106 site. In terms of tissue distribution, expressed in the enamel organ.

It is found in the secreted. It localises to the extracellular space. The protein localises to the extracellular matrix. In terms of biological role, degrades amelogenin, the major protein component of the enamel matrix and two of the macromolecules characterizing the cartilage extracellular matrix: aggrecan and the cartilage oligomeric matrix protein (COMP). May play a central role in tooth enamel formation. Cleaves aggrecan at the '360-Ser-|-Phe-361' site. This chain is Matrix metalloproteinase-20 (MMP20), found in Bos taurus (Bovine).